Reading from the N-terminus, the 490-residue chain is Cytochrome P450 monooxygenase anuE (490 aa).

Cysteine 405 contributes to the heme binding site.

Belongs to the cytochrome P450 family. It depends on heme as a cofactor.

It catalyses the reaction 2-hydroxymethyl-3-pentylphenol + reduced [NADPH--hemoprotein reductase] + O2 = (8S)-annullatin E + oxidized [NADPH--hemoprotein reductase] + H2O + H(+). Its pathway is secondary metabolite biosynthesis. Cytochrome P450 monooxygenase; part of the gene cluster that mediates the biosynthesis of annullatin D, an alkylated aromatic polyketide with a fused dihydrobenzofuran lactone ring system that exhibits potent agonistic activities toward the cannabinoid receptors. Within the pathway, anuE catalyzes the hydroxylation of 2-hydroxymethyl-3-pentylphenol at the side chain to produce (8S)-annullatin E. The annullatin backbone 2-hydroxymethyl-3-pentylphenol is assembled from one acetyl-CoA starter unit and 5 malonyl-CoA elongation units by cooperation of the highly reducing polyketide synthase anuA, the short-chain dehydrogenase anuB and the oxidoreductase anuC, before being hydroxylated at the C-5 alkyl chain by the cytochrome P450 monooxygenase anuE to form (8S)-annullatin E. The prenyltransferase anuH subsequently installs one isoprenyl group at the benzene ring to form (8S)-annullatin J. Enzymatic or nonenzymatic dihydro-benzofuran ring formation between the prenyl and the phenolic hydroxyl groups in (8S)-annullatin J results in two diastereomers (2S,9S)-annullatin H and compound 12. The intermediate (2S,9S)-annullatin H is then converted to (2S,9S)-annullatin D by the FAD-linked oxidoreductase anuG-catalyzed five-member lactone ring formation. The isomer 12 acts as a substrate for the short-chain dehydrogenase anuF and is oxidized to (2R)-annullatin F, which is subsequently acetylated by an acetyltransferase leading to (2R)-annullatin G formation. The remaining enzymes identified within the cluster, anuD, anuI and anuJ, seem not to be involved in annullatin biosynthesis. The sequence is that of Cytochrome P450 monooxygenase anuE from Penicillium roqueforti (strain FM164).